Consider the following 254-residue polypeptide: Thiazole synthase (254 aa).

Lys-95 functions as the Schiff-base intermediate with DXP in the catalytic mechanism. Residues Gly-156, 182–183 (AG), and 204–205 (NT) contribute to the 1-deoxy-D-xylulose 5-phosphate site.

It belongs to the ThiG family. Homotetramer. Forms heterodimers with either ThiH or ThiS.

It is found in the cytoplasm. It carries out the reaction [ThiS sulfur-carrier protein]-C-terminal-Gly-aminoethanethioate + 2-iminoacetate + 1-deoxy-D-xylulose 5-phosphate = [ThiS sulfur-carrier protein]-C-terminal Gly-Gly + 2-[(2R,5Z)-2-carboxy-4-methylthiazol-5(2H)-ylidene]ethyl phosphate + 2 H2O + H(+). Its pathway is cofactor biosynthesis; thiamine diphosphate biosynthesis. In terms of biological role, catalyzes the rearrangement of 1-deoxy-D-xylulose 5-phosphate (DXP) to produce the thiazole phosphate moiety of thiamine. Sulfur is provided by the thiocarboxylate moiety of the carrier protein ThiS. In vitro, sulfur can be provided by H(2)S. The protein is Thiazole synthase of Shewanella oneidensis (strain ATCC 700550 / JCM 31522 / CIP 106686 / LMG 19005 / NCIMB 14063 / MR-1).